The following is an 810-amino-acid chain: Volume-regulated anion channel subunit LRRC8A (810 aa).

M1 carries the post-translational modification N-acetylmethionine. The Cytoplasmic portion of the chain corresponds to 1–23 (MIPVTELRYFADTQPAYRILKPW). The helical transmembrane segment at 24-47 (WDVFTDYISIVMLMIAVFGGTLQV) threads the bilayer. The Extracellular segment spans residues 48–123 (TQDKMICLPC…YENRLHWFAK (76 aa)). 3 cysteine pairs are disulfide-bonded: C54–C310, C57–C65, and C113–C295. N66 and N83 each carry an N-linked (GlcNAc...) asparagine glycan. Residues 124–142 (YFPYLVLLHTLIFLACSNF) traverse the membrane as a helical segment. Topologically, residues 143 to 264 (WFKFPRTSSK…EEGDIVYRLY (122 aa)) are cytoplasmic. A Phosphothreonine modification is found at T200. At S202 the chain carries Phosphoserine. At T215 the chain carries Phosphothreonine. Phosphoserine is present on S217. A helical transmembrane segment spans residues 265–286 (MRQTIIKVIKFILIICYTVYYV). Residues 287–316 (HNIKFDVDCTVDIESLTGYRTYRCAHPLAT) lie on the Extracellular side of the membrane. A helical membrane pass occupies residues 317-341 (LFKILASFYISLVIFYGLICMYTLW). Residues 342–810 (WMLRRSLKKY…RLWRADKEQA (469 aa)) lie on the Cytoplasmic side of the membrane. LRR repeat units lie at residues 399-422 (ENKL…RLTK), 423-445 (NAQD…VFDL), 447-468 (ELEV…IAQL), 469-492 (TGLK…AFLR), 493-515 (ENLR…IYSL), 518-542 (LEEL…GLRE), 543-565 (LKRL…VTDV), 567-589 (VHLQ…SLKK), 590-613 (MANL…IFSL), 615-637 (NLQE…SFQH), 639-661 (HRLT…IGNL), 662-684 (TNLE…LFYC), 686-707 (KLRY…IGLL), 708-730 (QNLQ…LFQC), 732-753 (KLRA…VGEL), 754-776 (TNLT…LGEC), and 778-801 (LLKR…VKER). A Di-leucine motif motif is present at residues 706-707 (LL).

The protein belongs to the LRRC8 family. In terms of assembly, heterohexamer; oligomerizes with other LRRC8 proteins (LRRC8B, LRRC8C, LRRC8D and/or LRRC8E) to form a heterohexamer. Can form homohexamers in vitro, but these have lower conductance than heterohexamers. In vivo, the subunit composition may depend primarily on expression levels, and heterooligomeric channels containing various proportions of the different LRRC8 proteins may coexist. Interact with GRB2. Interacts with NOX4; this interaction prevents the ubiquitin-mediated degradation of LRRC8A. In terms of processing, N-glycosylated. As to expression, expressed in brain, kidney, ovary, lung, liver, heart, and fetal brain and liver. Found at high levels in bone marrow; lower levels are detected in peripheral blood cells. Expressed on T-cells as well as on B-lineage cells.

The protein resides in the cell membrane. It localises to the lysosome membrane. The enzyme catalyses chloride(in) = chloride(out). The catalysed reaction is iodide(out) = iodide(in). It catalyses the reaction taurine(out) = taurine(in). It carries out the reaction L-aspartate(out) = L-aspartate(in). The enzyme catalyses L-glutamate(out) = L-glutamate(in). The catalysed reaction is myo-inositol(out) = myo-inositol(in). It catalyses the reaction 2',3'-cGAMP(out) = 2',3'-cGAMP(in). Its activity is regulated as follows. Inhibited by (4-[(2-butyl-6,7-dichloro-2-cyclopentyl-2,3-dihydro-1-oxo-1H-inden-5-yl)oxy]butanoic acid), which plugs the channel like a cork in a bottle by binding in the extracellular selectivity filter and sterically occluding ion conduction. Lipids may block conduction in closed heterohexameric channels. Essential component of the volume-regulated anion channel (VRAC, also named VSOAC channel), an anion channel required to maintain a constant cell volume in response to extracellular or intracellular osmotic changes. The VRAC channel conducts iodide better than chloride and can also conduct organic osmolytes like taurine. Mediates efflux of amino acids, such as aspartate and glutamate, in response to osmotic stress. LRRC8A and LRRC8D are required for the uptake of the drug cisplatin. In complex with LRRC8C or LRRC8E, acts as a transporter of immunoreactive cyclic dinucleotide GMP-AMP (2'-3'-cGAMP), an immune messenger produced in response to DNA virus in the cytosol: mediates both import and export of 2'-3'-cGAMP, thereby promoting transfer of 2'-3'-cGAMP to bystander cells. In contrast, complexes containing LRRC8D inhibit transport of 2'-3'-cGAMP. Required for in vivo channel activity, together with at least one other family member (LRRC8B, LRRC8C, LRRC8D or LRRC8E); channel characteristics depend on the precise subunit composition. Can form functional channels by itself (in vitro). Involved in B-cell development: required for the pro-B cell to pre-B cell transition. Also required for T-cell development. Required for myoblast differentiation: VRAC activity promotes membrane hyperpolarization and regulates insulin-stimulated glucose metabolism and oxygen consumption. Also acts as a regulator of glucose-sensing in pancreatic beta cells: VRAC currents, generated in response to hypotonicity- or glucose-induced beta cell swelling, depolarize cells, thereby causing electrical excitation, leading to increase glucose sensitivity and insulin secretion. Also plays a role in lysosome homeostasis by forming functional lysosomal VRAC channels in response to low cytoplasmic ionic strength condition: lysosomal VRAC channels are necessary for the formation of large lysosome-derived vacuoles, which store and then expel excess water to maintain cytosolic water homeostasis. Acts as a key factor in NLRP3 inflammasome activation by modulating itaconate efflux and mitochondria function. The polypeptide is Volume-regulated anion channel subunit LRRC8A (Homo sapiens (Human)).